The primary structure comprises 96 residues: Co-chaperonin GroES (96 aa).

The protein belongs to the GroES chaperonin family. As to quaternary structure, heptamer of 7 subunits arranged in a ring. Interacts with the chaperonin GroEL.

It localises to the cytoplasm. Together with the chaperonin GroEL, plays an essential role in assisting protein folding. The GroEL-GroES system forms a nano-cage that allows encapsulation of the non-native substrate proteins and provides a physical environment optimized to promote and accelerate protein folding. GroES binds to the apical surface of the GroEL ring, thereby capping the opening of the GroEL channel. This Wolbachia sp. subsp. Drosophila simulans (strain wRi) protein is Co-chaperonin GroES.